A 477-amino-acid chain; its full sequence is Diphthine methyltransferase (477 aa).

3 WD repeats span residues 194–232 (HFEAWIAAFNYWQTELVYSGGDDCLLRGWDTRMLGTPVF), 236–276 (RHCM…QPLA), and 422–464 (VKTR…ARTL).

This sequence belongs to the DPH7 family. Interacts with INCA1.

The enzyme catalyses diphthine methyl ester-[translation elongation factor 2] + H2O = diphthine-[translation elongation factor 2] + methanol + H(+). It functions in the pathway protein modification; peptidyl-diphthamide biosynthesis. Catalyzes the demethylation of diphthine methyl ester to form diphthine, an intermediate diphthamide biosynthesis, a post-translational modification of histidine which occurs in translation elongation factor 2 (EEF2). The sequence is that of Diphthine methyltransferase (Dph7) from Mus musculus (Mouse).